The sequence spans 332 residues: D-xylose-binding periplasmic protein (332 aa).

The N-terminal stretch at 1–23 (MKIKSALLTLVGALTVFSSSAHS) is a signal peptide.

Belongs to the bacterial solute-binding protein 2 family.

It is found in the periplasm. Involved in the high-affinity D-xylose membrane transport system. Binds with high affinity to xylose. The sequence is that of D-xylose-binding periplasmic protein (xylF) from Haemophilus influenzae (strain ATCC 51907 / DSM 11121 / KW20 / Rd).